We begin with the raw amino-acid sequence, 224 residues long: MNNFVITVDGPSGVGKGTLSAALANKLGFALLDSGAIYRISALAALRQGIAFDDEDELAKLIPTLAIEFISNNDEVTAILNGENVTTQIRSAEAGQNASKIAIFPKVRAALLQRQRDFSSPMGLIADGRDMGTIVFPDAQVKFFLEASAEERTKRRVKQLQEKGFNANFGEILAEIKTRDLRDRTRAVVPLVPAKDALLLDSTHLSIEEVISQALAHIAKFKKF.

Position 10–18 (10–18 (GPSGVGKGT)) interacts with ATP.

Belongs to the cytidylate kinase family. Type 1 subfamily.

Its subcellular location is the cytoplasm. It catalyses the reaction CMP + ATP = CDP + ADP. It carries out the reaction dCMP + ATP = dCDP + ADP. In Haemophilus ducreyi (strain 35000HP / ATCC 700724), this protein is Cytidylate kinase.